The following is a 298-amino-acid chain: NADH-cytochrome b5 reductase 2 (298 aa).

Residues 15–38 (FVLPVAAAAVGLASYSFTSSSFIA) traverse the membrane as a helical segment. The 105-residue stretch at 49–153 (DEWIDLKLIS…KGPFVKWKWE (105 aa)) folds into the FAD-binding FR-type domain. 156-191 (QFKSIALIGGGTGITPLYQLIHEITKNPADKTQVSL) lines the FAD pocket.

The protein belongs to the flavoprotein pyridine nucleotide cytochrome reductase family. FAD is required as a cofactor.

The protein resides in the mitochondrion outer membrane. The catalysed reaction is 2 Fe(III)-[cytochrome b5] + NADH = 2 Fe(II)-[cytochrome b5] + NAD(+) + H(+). Its function is as follows. May mediate the reduction of outer membrane cytochrome b5. The chain is NADH-cytochrome b5 reductase 2 (MCR1) from Scheffersomyces stipitis (strain ATCC 58785 / CBS 6054 / NBRC 10063 / NRRL Y-11545) (Yeast).